The sequence spans 306 residues: Glutathione transport system permease protein GsiC (306 aa).

Residues 1–8 (MLNYVLKR) lie on the Cytoplasmic side of the membrane. A helical transmembrane segment spans residues 9-29 (LLGLIPTLLIVAVLVFLFVHL). The Periplasmic segment spans residues 30 to 102 (LPGDPARLIA…SRFLPTLWLT (73 aa)). The 198-residue stretch at 95-292 (FLPTLWLTIT…LEFILINLVV (198 aa)) folds into the ABC transmembrane type-1 domain. Residues 103–123 (ITSMIWAVLFGMAIGIAAAVW) traverse the membrane as a helical segment. The Cytoplasmic segment spans residues 124–134 (RNRWPDRLGMT). The helical transmembrane segment at 135 to 155 (LAVTGISFPAFALGMLLMQIF) threads the bilayer. Topologically, residues 156-168 (SVDLGWLPTVGAD) are periplasmic. The helical transmembrane segment at 169–189 (SWQHYILPSLTLGAAVASVMA) threads the bilayer. At 190–228 (RFTRSSFVDVLSEDYMRTARAKGVSETWVVLKHGLRNAM) the chain is on the cytoplasmic side. Residues 229–249 (IPVVTMMGLQFGFLLGGSIVV) form a helical membrane-spanning segment. The Periplasmic portion of the chain corresponds to 250 to 278 (EKVFNWPGLGRLLVDSVDMRDYPVIQAEV). Residues 279–299 (LLFSLEFILINLVVDVLYAAI) traverse the membrane as a helical segment. Residues 300 to 306 (NPAIRYK) lie on the Cytoplasmic side of the membrane.

Belongs to the binding-protein-dependent transport system permease family. The complex is composed of two ATP-binding proteins (GsiA), two transmembrane proteins (GsiC and GsiD) and a solute-binding protein (GsiB).

Its subcellular location is the cell inner membrane. Functionally, part of the ABC transporter complex GsiABCD involved in glutathione import. Probably responsible for the translocation of the substrate across the membrane. The polypeptide is Glutathione transport system permease protein GsiC (Salmonella paratyphi A (strain ATCC 9150 / SARB42)).